Consider the following 271-residue polypeptide: MEAAAEPGNLAGVRHIILVLSGKGGVGKSTISTELALALRHQGKKVGILDVDLCGPSIPHMLHAQGKAVHQCDSGWVPVFVDQEQSISLMSVGFLLENPDEAVVWRGPKKHALIKQFVSDVAWGELDYLVVDTPPGTSDEHMATVEALRPYKPLGALVVTTPQAVSIGDVRRELTFCKKTGLQVIGVIENMSGFACPHCAECTNVFSSGGGEELARLAGVPFLGSVPLDPQLTRSLEEGRDFIQEFPKSTAYSALTSIAHKVLHQMPALCS.

Methionine 1 bears the N-acetylmethionine mark. Residue 22-29 participates in ATP binding; the sequence is GKGGVGKS. Positions 196 and 199 each coordinate [4Fe-4S] cluster.

This sequence belongs to the Mrp/NBP35 ATP-binding proteins family. NUBP2/CFD1 subfamily. As to quaternary structure, heterotetramer of 2 NUBP1 and 2 NUBP2 chains. Interacts with KIFC1. Interacts with NUBP1. The cofactor is [4Fe-4S] cluster.

The protein resides in the nucleus. Its subcellular location is the cytoplasm. It localises to the cytoskeleton. The protein localises to the microtubule organizing center. It is found in the centrosome. The protein resides in the cilium axoneme. Its subcellular location is the centriole. Its function is as follows. Component of the cytosolic iron-sulfur (Fe/S) protein assembly (CIA) machinery. Required for maturation of extramitochondrial Fe-S proteins. The NUBP1-NUBP2 heterotetramer forms a Fe-S scaffold complex, mediating the de novo assembly of an Fe-S cluster and its transfer to target apoproteins. Negatively regulates cilium formation and structure. In Rattus norvegicus (Rat), this protein is Cytosolic Fe-S cluster assembly factor NUBP2 (Nubp2).